We begin with the raw amino-acid sequence, 470 residues long: 3-isopropylmalate dehydratase large subunit (470 aa).

3 residues coordinate [4Fe-4S] cluster: C351, C411, and C414.

This sequence belongs to the aconitase/IPM isomerase family. LeuC type 1 subfamily. Heterodimer of LeuC and LeuD. The cofactor is [4Fe-4S] cluster.

The enzyme catalyses (2R,3S)-3-isopropylmalate = (2S)-2-isopropylmalate. The protein operates within amino-acid biosynthesis; L-leucine biosynthesis; L-leucine from 3-methyl-2-oxobutanoate: step 2/4. Its function is as follows. Catalyzes the isomerization between 2-isopropylmalate and 3-isopropylmalate, via the formation of 2-isopropylmaleate. The polypeptide is 3-isopropylmalate dehydratase large subunit (Rhodopseudomonas palustris (strain HaA2)).